Reading from the N-terminus, the 524-residue chain is Light-independent protochlorophyllide reductase subunit B (524 aa).

Asp36 contributes to the [4Fe-4S] cluster binding site. Asp290 (proton donor) is an active-site residue. Gly425–Leu426 is a binding site for substrate.

Belongs to the ChlB/BchB/BchZ family. In terms of assembly, protochlorophyllide reductase is composed of three subunits; ChlL, ChlN and ChlB. Forms a heterotetramer of two ChlB and two ChlN subunits. [4Fe-4S] cluster serves as cofactor.

The catalysed reaction is chlorophyllide a + oxidized 2[4Fe-4S]-[ferredoxin] + 2 ADP + 2 phosphate = protochlorophyllide a + reduced 2[4Fe-4S]-[ferredoxin] + 2 ATP + 2 H2O. The protein operates within porphyrin-containing compound metabolism; chlorophyll biosynthesis (light-independent). Functionally, component of the dark-operative protochlorophyllide reductase (DPOR) that uses Mg-ATP and reduced ferredoxin to reduce ring D of protochlorophyllide (Pchlide) to form chlorophyllide a (Chlide). This reaction is light-independent. The NB-protein (ChlN-ChlB) is the catalytic component of the complex. The polypeptide is Light-independent protochlorophyllide reductase subunit B (Synechococcus sp. (strain CC9605)).